The following is a 456-amino-acid chain: tRNA-2-methylthio-N(6)-dimethylallyladenosine synthase (456 aa).

The MTTase N-terminal domain occupies 19–137; that stretch reads KHFFIETWGC…FPEYLHRVQV (119 aa). 6 residues coordinate [4Fe-4S] cluster: C28, C64, C98, C174, C178, and C181. Residues 160–392 form the Radical SAM core domain; the sequence is RKSNVKAFVT…AVNEGIVVGN (233 aa). The TRAM domain maps to 393–456; sequence KAAEGKIYEV…SFSLVGEVVE (64 aa).

The protein belongs to the methylthiotransferase family. MiaB subfamily. In terms of assembly, monomer. It depends on [4Fe-4S] cluster as a cofactor.

The protein localises to the cytoplasm. It carries out the reaction N(6)-dimethylallyladenosine(37) in tRNA + (sulfur carrier)-SH + AH2 + 2 S-adenosyl-L-methionine = 2-methylsulfanyl-N(6)-dimethylallyladenosine(37) in tRNA + (sulfur carrier)-H + 5'-deoxyadenosine + L-methionine + A + S-adenosyl-L-homocysteine + 2 H(+). Its function is as follows. Catalyzes the methylthiolation of N6-(dimethylallyl)adenosine (i(6)A), leading to the formation of 2-methylthio-N6-(dimethylallyl)adenosine (ms(2)i(6)A) at position 37 in tRNAs that read codons beginning with uridine. This chain is tRNA-2-methylthio-N(6)-dimethylallyladenosine synthase, found in Clostridium botulinum (strain Eklund 17B / Type B).